The following is a 318-amino-acid chain: Ubiquinol oxidase (318 aa).

Residues 150–170 (VVVLETVAAIPGMVGGMFRHL) traverse the membrane as a helical segment. Fe cation contacts are provided by Glu154, Glu193, and His196. The chain crosses the membrane as a helical span at residues 212–232 (MLIKLGQFLFFNGYMVFYFVA). Positions 244, 295, and 298 each coordinate Fe cation.

This sequence belongs to the alternative oxidase family. Found as monomers and homodimers. Fe cation serves as cofactor.

Its subcellular location is the mitosome membrane. It catalyses the reaction 2 a ubiquinol + O2 = 2 a ubiquinone + 2 H2O. Alternative oxidase which function may be to reoxidize reducing equivalents produced by glycolysis such as ubiquinol. The polypeptide is Ubiquinol oxidase (AOX) (Trachipleistophora hominis (Microsporidian parasite)).